We begin with the raw amino-acid sequence, 460 residues long: Protein king tubby (460 aa).

Disordered regions lie at residues asparagine 75–arginine 97 and histidine 115–valine 208. The span at alanine 85–arginine 97 shows a compositional bias: polar residues. A compositionally biased stretch (low complexity) spans glutamine 130–glutamine 145. Serine 153 is subject to Phosphoserine. Positions asparagine 194–glutamate 203 are enriched in gly residues.

This sequence belongs to the TUB family. In terms of tissue distribution, detected in sensory neurons which have a ciliary structure such as the chordotonal neurons, Orco-expressing olfactory receptor neurons, labellar gustatory receptor neurons and in the femoral chordotonal organ (at protein level). In the chordotonal neurons of the Johnston's organ expressed in the proximal to distal cilia, with lower levels of expression in the distal portion (at protein level). Also detected in the salivary glands and antenna (at protein level). Expressed in photoreceptor cells (at protein level). At stage 9 expression is detected in a subset of neuroblasts. By stage 12 expression is found in both the CNS and PNS. In late-stage embryos, expression persists in the CNS and PNS with more abundant expression in the antennal-maxillary sensory neurons and in bilateral groups of cells in the brain.

It localises to the cytoplasm. Its subcellular location is the nucleus. The protein localises to the cell projection. It is found in the cilium membrane. The protein resides in the rhabdomere. Functions in regulating protein trafficking, retinal maintenance and lipid storage. Protects photoreceptor cells R1 to R6 against light-induced retinal degeneration by stimulating norpA-mediated endocytosis of the rhodopsin ninaE (Rh1). In the auditory receptor neurons, functions as a cilia trafficking regulator of various transient receptor potential (TRP) channel components including iav and nompC. Likely to deliver pre-ciliary vesicles containing membrane proteins such as iav and nompC to the intraflagellar transport complex (IFT) at the cilia base. Plays a role in the inhibition of fat storage. This Drosophila melanogaster (Fruit fly) protein is Protein king tubby (ktub).